The following is a 38-amino-acid chain: Defensin-like peptide 3 (38 aa).

2 disulfide bridges follow: Cys6/Cys36 and Cys13/Cys29.

In terms of tissue distribution, produced by the crural gland and detected in venom from the spur located on each male hind leg.

The protein localises to the secreted. Functionally, does not show antimicrobial, myotoxic, hemolytic and cell-promoting activities. The sequence is that of Defensin-like peptide 3 from Ornithorhynchus anatinus (Duckbill platypus).